The sequence spans 297 residues: Palmitoyl-protein thioesterase ABHD10, mitochondrial (297 aa).

A mitochondrion-targeting transit peptide spans 1–43 (MAAWAPCRRWGWAAVSFGRHPGLSASLARKPPRAWWLSACRQK). In terms of domain architecture, AB hydrolase-1 spans 69 to 196 (IIFIPGYLSN…EIEMKGEWTL (128 aa)). Residues serine 143, aspartate 240, and histidine 270 each act as charge relay system in the active site.

This sequence belongs to the AB hydrolase superfamily.

The protein resides in the mitochondrion. The enzyme catalyses S-hexadecanoyl-L-cysteinyl-[protein] + H2O = L-cysteinyl-[protein] + hexadecanoate + H(+). It catalyses the reaction mycophenolic acid O-acyl-beta-D-glucuronide + H2O = mycophenolate + D-glucuronate + H(+). Its activity is regulated as follows. Inhibited by palmostatin-B. In terms of biological role, acts as an acyl-protein thioesterase that hydrolyzes fatty acids from acylated residues in proteins. Regulates the mitochondrial S-depalmitoylation of the nucleophilic active site residue of peroxiredoxin-5/PRDX5, a key antioxidant protein, therefore modulating mitochondrial antioxidant ability. Also catalyzes the deglucuronidation of mycophenolic acid acyl-glucuronide, an active metabolite of the immunosuppressant drug mycophenolate. The chain is Palmitoyl-protein thioesterase ABHD10, mitochondrial from Mus musculus (Mouse).